The primary structure comprises 317 residues: Acetyl-coenzyme A carboxylase carboxyl transferase subunit alpha (317 aa).

Residues Leu40–Glu293 form the CoA carboxyltransferase C-terminal domain.

The protein belongs to the AccA family. As to quaternary structure, acetyl-CoA carboxylase is a heterohexamer composed of biotin carboxyl carrier protein (AccB), biotin carboxylase (AccC) and two subunits each of ACCase subunit alpha (AccA) and ACCase subunit beta (AccD).

Its subcellular location is the cytoplasm. The enzyme catalyses N(6)-carboxybiotinyl-L-lysyl-[protein] + acetyl-CoA = N(6)-biotinyl-L-lysyl-[protein] + malonyl-CoA. It participates in lipid metabolism; malonyl-CoA biosynthesis; malonyl-CoA from acetyl-CoA: step 1/1. In terms of biological role, component of the acetyl coenzyme A carboxylase (ACC) complex. First, biotin carboxylase catalyzes the carboxylation of biotin on its carrier protein (BCCP) and then the CO(2) group is transferred by the carboxyltransferase to acetyl-CoA to form malonyl-CoA. The sequence is that of Acetyl-coenzyme A carboxylase carboxyl transferase subunit alpha from Rhizobium meliloti (strain 1021) (Ensifer meliloti).